The sequence spans 261 residues: Glucose 1-dehydrogenase (261 aa).

An NADP(+)-binding site is contributed by 11–35 (VITGSSTGLGKSMAIRFATEKAKVV). Ser145 lines the substrate pocket. Tyr158 serves as the catalytic Proton acceptor.

The protein belongs to the short-chain dehydrogenases/reductases (SDR) family. Homotetramer.

It carries out the reaction D-glucose + NAD(+) = D-glucono-1,5-lactone + NADH + H(+). It catalyses the reaction D-glucose + NADP(+) = D-glucono-1,5-lactone + NADPH + H(+). The chain is Glucose 1-dehydrogenase from Priestia megaterium (Bacillus megaterium).